Reading from the N-terminus, the 717-residue chain is DNA-directed RNA polymerase subunit beta' (717 aa).

Zn(2+) contacts are provided by Cys-71, Cys-73, Cys-91, and Cys-94. Positions 481, 483, and 485 each coordinate Mg(2+).

The protein belongs to the RNA polymerase beta' chain family. RpoC1 subfamily. In terms of assembly, in plastids the minimal PEP RNA polymerase catalytic core is composed of four subunits: alpha, beta, beta', and beta''. When a (nuclear-encoded) sigma factor is associated with the core the holoenzyme is formed, which can initiate transcription. Mg(2+) serves as cofactor. Zn(2+) is required as a cofactor.

Its subcellular location is the plastid. It is found in the chloroplast. The enzyme catalyses RNA(n) + a ribonucleoside 5'-triphosphate = RNA(n+1) + diphosphate. Functionally, DNA-dependent RNA polymerase catalyzes the transcription of DNA into RNA using the four ribonucleoside triphosphates as substrates. The sequence is that of DNA-directed RNA polymerase subunit beta' from Chlorokybus atmophyticus (Soil alga).